A 98-amino-acid chain; its full sequence is Large ribosomal subunit protein uL23 (98 aa).

This sequence belongs to the universal ribosomal protein uL23 family. As to quaternary structure, part of the 50S ribosomal subunit. Contacts protein L29, and trigger factor when it is bound to the ribosome.

In terms of biological role, one of the early assembly proteins it binds 23S rRNA. One of the proteins that surrounds the polypeptide exit tunnel on the outside of the ribosome. Forms the main docking site for trigger factor binding to the ribosome. This is Large ribosomal subunit protein uL23 from Legionella pneumophila (strain Paris).